The primary structure comprises 429 residues: Ribosomal RNA small subunit methyltransferase B (429 aa).

Residues 254 to 260, D277, D303, and D322 contribute to the S-adenosyl-L-methionine site; that span reads CAAPGGK. The active-site Nucleophile is C375.

This sequence belongs to the class I-like SAM-binding methyltransferase superfamily. RsmB/NOP family.

It is found in the cytoplasm. It carries out the reaction cytidine(967) in 16S rRNA + S-adenosyl-L-methionine = 5-methylcytidine(967) in 16S rRNA + S-adenosyl-L-homocysteine + H(+). Its function is as follows. Specifically methylates the cytosine at position 967 (m5C967) of 16S rRNA. The protein is Ribosomal RNA small subunit methyltransferase B of Yersinia enterocolitica serotype O:8 / biotype 1B (strain NCTC 13174 / 8081).